The following is a 218-amino-acid chain: Protein N-lysine methyltransferase METTL21A (218 aa).

S-adenosyl-L-methionine is bound by residues Trp-47, 73-75, Asp-94, Trp-125, and Ala-143; that span reads GAG.

It belongs to the methyltransferase superfamily. METTL21 family. As to quaternary structure, interacts with heat shock protein 70 family members; at least some of these proteins are methylation substrates.

It is found in the cytoplasm. It catalyses the reaction L-lysyl-[protein] + 3 S-adenosyl-L-methionine = N(6),N(6),N(6)-trimethyl-L-lysyl-[protein] + 3 S-adenosyl-L-homocysteine + 3 H(+). Functionally, protein-lysine methyltransferase that selectively trimethylates residues in heat shock protein 70 (HSP70) family members. Contributes to the in vivo trimethylation of Lys residues in HSPA1 and HSPA8. In vitro methylates 'Lys-561' in HSPA1, 'Lys-564' in HSPA2, 'Lys-585' in HSPA5, 'Lys-563' in HSPA6 and 'Lys-561' in HSPA8. The polypeptide is Protein N-lysine methyltransferase METTL21A (METTL21A) (Homo sapiens (Human)).